The primary structure comprises 935 residues: Isoleucine--tRNA ligase (935 aa).

Residues 58 to 68 (PYANGSIHVGH) carry the 'HIGH' region motif. Glu-558 serves as a coordination point for L-isoleucyl-5'-AMP. The 'KMSKS' region motif lies at 599 to 603 (KMSKS). Lys-602 contributes to the ATP binding site. Positions 897, 900, 917, and 920 each coordinate Zn(2+).

This sequence belongs to the class-I aminoacyl-tRNA synthetase family. IleS type 1 subfamily. In terms of assembly, monomer. Requires Zn(2+) as cofactor.

The protein localises to the cytoplasm. The catalysed reaction is tRNA(Ile) + L-isoleucine + ATP = L-isoleucyl-tRNA(Ile) + AMP + diphosphate. Functionally, catalyzes the attachment of isoleucine to tRNA(Ile). As IleRS can inadvertently accommodate and process structurally similar amino acids such as valine, to avoid such errors it has two additional distinct tRNA(Ile)-dependent editing activities. One activity is designated as 'pretransfer' editing and involves the hydrolysis of activated Val-AMP. The other activity is designated 'posttransfer' editing and involves deacylation of mischarged Val-tRNA(Ile). The protein is Isoleucine--tRNA ligase of Francisella tularensis subsp. mediasiatica (strain FSC147).